Reading from the N-terminus, the 275-residue chain is Large ribosomal subunit protein uL2 (275 aa).

Positions 218-275 (RPQTRGSAMNPIDHPHGGGEGKTNSGRHPVSPWGMPTKGYKTRKKKASDKLIISKRKK) are disordered. A compositionally biased stretch (basic residues) spans 257-275 (YKTRKKKASDKLIISKRKK).

This sequence belongs to the universal ribosomal protein uL2 family. As to quaternary structure, part of the 50S ribosomal subunit. Forms a bridge to the 30S subunit in the 70S ribosome.

Functionally, one of the primary rRNA binding proteins. Required for association of the 30S and 50S subunits to form the 70S ribosome, for tRNA binding and peptide bond formation. It has been suggested to have peptidyltransferase activity; this is somewhat controversial. Makes several contacts with the 16S rRNA in the 70S ribosome. This chain is Large ribosomal subunit protein uL2, found in Sulfurovum sp. (strain NBC37-1).